A 213-amino-acid polypeptide reads, in one-letter code: Thymidylate kinase (213 aa).

11–18 provides a ligand contact to ATP; the sequence is GPDGAGKT.

This sequence belongs to the thymidylate kinase family.

It carries out the reaction dTMP + ATP = dTDP + ADP. Functionally, phosphorylation of dTMP to form dTDP in both de novo and salvage pathways of dTTP synthesis. The chain is Thymidylate kinase from Oenococcus oeni (strain ATCC BAA-331 / PSU-1).